The chain runs to 391 residues: Formate-dependent phosphoribosylglycinamide formyltransferase (391 aa).

N(1)-(5-phospho-beta-D-ribosyl)glycinamide-binding positions include 20–21 and Glu-80; that span reads EL. Residues Arg-112, Lys-153, 158–163, 193–196, and Glu-201 contribute to the ATP site; these read SSGKGQ and EGFI. The 190-residue stretch at 117–306 folds into the ATP-grasp domain; that stretch reads RLAAETLGLP…EFALHVRAIL (190 aa). Positions 265 and 277 each coordinate Mg(2+). N(1)-(5-phospho-beta-D-ribosyl)glycinamide is bound by residues Asp-284, Lys-354, and 361 to 362; that span reads RR.

Belongs to the PurK/PurT family. As to quaternary structure, homodimer.

The enzyme catalyses N(1)-(5-phospho-beta-D-ribosyl)glycinamide + formate + ATP = N(2)-formyl-N(1)-(5-phospho-beta-D-ribosyl)glycinamide + ADP + phosphate + H(+). It participates in purine metabolism; IMP biosynthesis via de novo pathway; N(2)-formyl-N(1)-(5-phospho-D-ribosyl)glycinamide from N(1)-(5-phospho-D-ribosyl)glycinamide (formate route): step 1/1. Its function is as follows. Involved in the de novo purine biosynthesis. Catalyzes the transfer of formate to 5-phospho-ribosyl-glycinamide (GAR), producing 5-phospho-ribosyl-N-formylglycinamide (FGAR). Formate is provided by PurU via hydrolysis of 10-formyl-tetrahydrofolate. The sequence is that of Formate-dependent phosphoribosylglycinamide formyltransferase from Shewanella sp. (strain ANA-3).